The primary structure comprises 199 residues: CASP-like protein 2B1 (199 aa).

At 1-26 the chain is on the cytoplasmic side; it reads MSYLGVGLSPVNVAGTKMKLMDRKVR. Residues 27-47 traverse the membrane as a helical segment; that stretch reads LTELILRCSVCALALVAAILI. Residues 48-69 are Extracellular-facing; the sequence is ATDTQVKEIFTIQKKAKYTDMK. A helical transmembrane segment spans residues 70-90; it reads ALVFLVVVNGIAAAYSLLHMV. Residues 91 to 106 lie on the Cytoplasmic side of the membrane; it reads RCVVGMMKGSVLFSKP. Residues 107–127 traverse the membrane as a helical segment; the sequence is LAWAIFSGDQAIAYLTVAGVA. At 128–164 the chain is on the extracellular side; sequence AAAQSAAFAKLGEPELQWMKICTIYGKFCNQVGEGIA. Residues 165–185 form a helical membrane-spanning segment; sequence TALLASIGMVLISSISAFALF. The Cytoplasmic portion of the chain corresponds to 186-199; the sequence is RLYGGNKAQQGSRW.

Belongs to the Casparian strip membrane proteins (CASP) family. In terms of assembly, homodimer and heterodimers.

It is found in the cell membrane. The protein is CASP-like protein 2B1 of Eutrema halophilum (Salt cress).